We begin with the raw amino-acid sequence, 210 residues long: Thymidylate kinase (210 aa).

10 to 17 (GLEGAGKS) serves as a coordination point for ATP.

Belongs to the thymidylate kinase family.

It catalyses the reaction dTMP + ATP = dTDP + ADP. Functionally, phosphorylation of dTMP to form dTDP in both de novo and salvage pathways of dTTP synthesis. The sequence is that of Thymidylate kinase (tmk) from Haemophilus influenzae (strain ATCC 51907 / DSM 11121 / KW20 / Rd).